A 199-amino-acid polypeptide reads, in one-letter code: Inner membrane protein E199L (199 aa).

A glycan (N-linked (GlcNAc...) asparagine; by host) is linked at Asn131. The chain crosses the membrane as a helical span at residues 150–170 (INVMNHPFLTLILIILILIII).

This sequence belongs to the asfivirus E199L family. As to quaternary structure, interacts with host PYCR2; this interaction results in autophagy activation. Post-translationally, contains intramolecular disulfide bonds.

The protein resides in the virion membrane. The protein localises to the host membrane. In terms of biological role, essential for viral fusion with host endosomal membrane and core release. Not required for virus morphogenesis and egress. Induces complete autophagy through the interaction with and down-regulation of host PYCR2. This is Inner membrane protein E199L from African swine fever virus (isolate Tick/South Africa/Pretoriuskop Pr4/1996) (ASFV).